Reading from the N-terminus, the 172-residue chain is Adenine phosphoribosyltransferase (172 aa).

This sequence belongs to the purine/pyrimidine phosphoribosyltransferase family. As to quaternary structure, homodimer.

The protein resides in the cytoplasm. It carries out the reaction AMP + diphosphate = 5-phospho-alpha-D-ribose 1-diphosphate + adenine. The protein operates within purine metabolism; AMP biosynthesis via salvage pathway; AMP from adenine: step 1/1. Catalyzes a salvage reaction resulting in the formation of AMP, that is energically less costly than de novo synthesis. This chain is Adenine phosphoribosyltransferase, found in Prochlorococcus marinus (strain MIT 9211).